The primary structure comprises 206 residues: Protein GrpE (206 aa).

This sequence belongs to the GrpE family. As to quaternary structure, homodimer.

The protein localises to the cytoplasm. Functionally, participates actively in the response to hyperosmotic and heat shock by preventing the aggregation of stress-denatured proteins, in association with DnaK and GrpE. It is the nucleotide exchange factor for DnaK and may function as a thermosensor. Unfolded proteins bind initially to DnaJ; upon interaction with the DnaJ-bound protein, DnaK hydrolyzes its bound ATP, resulting in the formation of a stable complex. GrpE releases ADP from DnaK; ATP binding to DnaK triggers the release of the substrate protein, thus completing the reaction cycle. Several rounds of ATP-dependent interactions between DnaJ, DnaK and GrpE are required for fully efficient folding. The protein is Protein GrpE of Psychromonas ingrahamii (strain DSM 17664 / CCUG 51855 / 37).